A 565-amino-acid chain; its full sequence is Glucose-6-phosphate isomerase (565 aa).

The active-site Proton donor is E373. Residues H404 and K530 contribute to the active site.

Belongs to the GPI family.

The protein resides in the cytoplasm. The catalysed reaction is alpha-D-glucose 6-phosphate = beta-D-fructose 6-phosphate. Its pathway is carbohydrate biosynthesis; gluconeogenesis. The protein operates within carbohydrate degradation; glycolysis; D-glyceraldehyde 3-phosphate and glycerone phosphate from D-glucose: step 2/4. In terms of biological role, catalyzes the reversible isomerization of glucose-6-phosphate to fructose-6-phosphate. This chain is Glucose-6-phosphate isomerase, found in Corynebacterium jeikeium (strain K411).